The primary structure comprises 641 residues: Chaperone protein DnaK (641 aa).

At T199 the chain carries Phosphothreonine; by autocatalysis. The interval 602-641 (MYADQADQAQQAGGQEEGQAKSADDAVDAEFEEVKDDDKK) is disordered. Positions 604–615 (ADQADQAQQAGG) are enriched in low complexity. Residues 626-641 (DAVDAEFEEVKDDDKK) are compositionally biased toward acidic residues.

The protein belongs to the heat shock protein 70 family.

Acts as a chaperone. This Marinobacter nauticus (strain ATCC 700491 / DSM 11845 / VT8) (Marinobacter aquaeolei) protein is Chaperone protein DnaK.